A 254-amino-acid polypeptide reads, in one-letter code: UPF0173 protein YddR (254 aa).

The protein belongs to the UPF0173 family.

In Bacillus subtilis (strain 168), this protein is UPF0173 protein YddR (yddR).